Consider the following 627-residue polypeptide: Ras and EF-hand domain-containing protein homolog (627 aa).

Residues 55-245 (YERVIRNFLR…RKLHDSNDGL (191 aa)) adopt a coiled-coil conformation. Serine 266 and serine 272 each carry phosphoserine. Residues 438–443 (AVGKSS), 541–544 (NKAD), and 578–579 (AK) each bind GTP.

This sequence belongs to the small GTPase superfamily. Rab family. Homodimer. Interacts with the dynein-dynactin complex.

The protein resides in the cytoplasm. The protein localises to the perinuclear region. Functionally, binds predominantly GDP, and also GTP. Acts as a dynein adapter protein that activates dynein-mediated transport and dynein-dynactin motility on microtubules. The polypeptide is Ras and EF-hand domain-containing protein homolog (Rasef) (Mus musculus (Mouse)).